The chain runs to 119 residues: Small ribosomal subunit protein bS6 (119 aa).

A disordered region spans residues 96–119; sequence VTEPSPLARSQEKDEEEGGRTAEA.

This sequence belongs to the bacterial ribosomal protein bS6 family.

Its function is as follows. Binds together with bS18 to 16S ribosomal RNA. The protein is Small ribosomal subunit protein bS6 of Alkalilimnicola ehrlichii (strain ATCC BAA-1101 / DSM 17681 / MLHE-1).